We begin with the raw amino-acid sequence, 235 residues long: Leucyl/phenylalanyl-tRNA--protein transferase (235 aa).

The protein belongs to the L/F-transferase family.

Its subcellular location is the cytoplasm. It carries out the reaction N-terminal L-lysyl-[protein] + L-leucyl-tRNA(Leu) = N-terminal L-leucyl-L-lysyl-[protein] + tRNA(Leu) + H(+). It catalyses the reaction N-terminal L-arginyl-[protein] + L-leucyl-tRNA(Leu) = N-terminal L-leucyl-L-arginyl-[protein] + tRNA(Leu) + H(+). The catalysed reaction is L-phenylalanyl-tRNA(Phe) + an N-terminal L-alpha-aminoacyl-[protein] = an N-terminal L-phenylalanyl-L-alpha-aminoacyl-[protein] + tRNA(Phe). Functionally, functions in the N-end rule pathway of protein degradation where it conjugates Leu, Phe and, less efficiently, Met from aminoacyl-tRNAs to the N-termini of proteins containing an N-terminal arginine or lysine. The chain is Leucyl/phenylalanyl-tRNA--protein transferase from Cellvibrio japonicus (strain Ueda107) (Pseudomonas fluorescens subsp. cellulosa).